The sequence spans 527 residues: Plant-specific TFIIB-related protein PTF2 (527 aa).

The TFIIB-type zinc-finger motif lies at 1 to 30 (MRCKRCNGSNFERDEDTGNSYCGGCGTLRE).

As to quaternary structure, can form homodimer. Interacts with TBP2. Expressed in shoot apical meristems, root tips, primordia of lateral roots, inflorescences, developing pollen grains and embryos.

Its subcellular location is the nucleus. Plant-specific TFIIB-related protein that plays important roles in pollen germination and embryogenesis, possibly by regulating gene expression through interaction with TBP2 and the subunits of RNA polymerases. Binds double-stranded DNA in vitro. The sequence is that of Plant-specific TFIIB-related protein PTF2 from Arabidopsis thaliana (Mouse-ear cress).